The sequence spans 446 residues: Phosphoglucosamine mutase (446 aa).

Ser99 acts as the Phosphoserine intermediate in catalysis. Ser99, Asp242, Asp244, and Asp246 together coordinate Mg(2+). The residue at position 99 (Ser99) is a Phosphoserine.

The protein belongs to the phosphohexose mutase family. It depends on Mg(2+) as a cofactor. In terms of processing, activated by phosphorylation.

The enzyme catalyses alpha-D-glucosamine 1-phosphate = D-glucosamine 6-phosphate. Functionally, catalyzes the conversion of glucosamine-6-phosphate to glucosamine-1-phosphate. This is Phosphoglucosamine mutase from Campylobacter concisus (strain 13826).